The chain runs to 572 residues: MRTSQYLLSTLKETPADAEVISHQLMLRAGMIRKLASGLYTWLPTGLRVLKKVENIVREEMNNANAIEVCMPVVQPADLWQESGRWEQYGPELLRFVDRGDRPFVLGPTHEEVITDLIRNEISSYKQLPLNFFQIQTKFRDEVRPRFGVMRSREFLMKDAYSFHTSQESLQATYEAMYEAYSKIFSRMGLDFRPVHADTGSIGGSASHEFQVLADSGEDDIVFSTGSDFAANIELAEAVAPAEPRAAASEELRIVDTPNAKTIAELVEQFQLPVTKTVKTLLVRAKEESGHKLVALLVRGDHELNEIKAEKLPQVAAPLVFATEEEIRAIVGAGPGSLGPVNLQVPVVADRSVAAMSDFGAGANIDGKHYFGINWERDLPLPQVADIRNVVEGDASPDGKGTLLIKRGIEVGHIFQLGTKYSEAMKATVQGEDGRNQVLTMGCYGIGVTRVVAAAIEQNHDERGIIWPDAIAPFQVAILPMNMHKSFRVQALAEELYNTLRSHGIDVILDDRKERPGVMFADMELIGVPHSIVIGDRNLDSEEIEYKNRRVGEKQMIKTGEVIDFLLGQIKR.

Belongs to the class-II aminoacyl-tRNA synthetase family. ProS type 1 subfamily. In terms of assembly, homodimer.

The protein localises to the cytoplasm. It carries out the reaction tRNA(Pro) + L-proline + ATP = L-prolyl-tRNA(Pro) + AMP + diphosphate. Catalyzes the attachment of proline to tRNA(Pro) in a two-step reaction: proline is first activated by ATP to form Pro-AMP and then transferred to the acceptor end of tRNA(Pro). As ProRS can inadvertently accommodate and process non-cognate amino acids such as alanine and cysteine, to avoid such errors it has two additional distinct editing activities against alanine. One activity is designated as 'pretransfer' editing and involves the tRNA(Pro)-independent hydrolysis of activated Ala-AMP. The other activity is designated 'posttransfer' editing and involves deacylation of mischarged Ala-tRNA(Pro). The misacylated Cys-tRNA(Pro) is not edited by ProRS. The chain is Proline--tRNA ligase from Serratia proteamaculans (strain 568).